The chain runs to 203 residues: Pyrrolidone-carboxylate peptidase 1 (203 aa).

Residues E78, C141, and H165 contribute to the active site.

This sequence belongs to the peptidase C15 family. As to quaternary structure, homotetramer.

It is found in the cytoplasm. The catalysed reaction is Release of an N-terminal pyroglutamyl group from a polypeptide, the second amino acid generally not being Pro.. In terms of biological role, removes 5-oxoproline from various penultimate amino acid residues except L-proline. The sequence is that of Pyrrolidone-carboxylate peptidase 1 from Caldanaerobacter subterraneus subsp. tengcongensis (strain DSM 15242 / JCM 11007 / NBRC 100824 / MB4) (Thermoanaerobacter tengcongensis).